Consider the following 282-residue polypeptide: Protease HtpX homolog (282 aa).

A run of 2 helical transmembrane segments spans residues 6–26 and 28–48; these read TFILMTFLALIFMFFGGLIGG and QGVIIAFVVALGMNFFSYFFS. A Zn(2+)-binding site is contributed by histidine 130. Residue glutamate 131 is part of the active site. A Zn(2+)-binding site is contributed by histidine 134. 2 consecutive transmembrane segments (helical) span residues 140-160 and 177-197; these read ILIGSVAAVFAGAIAILANFA and ILMIVAAIIMPIAAAIIQMAI. Zn(2+) is bound at residue glutamate 202.

It belongs to the peptidase M48B family. Requires Zn(2+) as cofactor.

Its subcellular location is the cell inner membrane. The protein is Protease HtpX homolog of Campylobacter hominis (strain ATCC BAA-381 / DSM 21671 / CCUG 45161 / LMG 19568 / NCTC 13146 / CH001A).